Here is a 520-residue protein sequence, read N- to C-terminus: Nonsense-mediated mRNA decay factor SMG9 (520 aa).

Positions 1-143 are disordered; the sequence is MSESGHSQPG…KGEKEGQRPT (143 aa). S2 carries the N-acetylserine modification. A phosphoserine mark is found at S2, S4, S7, S32, and S53. Positions 36 to 53 are enriched in basic and acidic residues; the sequence is GRERDYIAPWERERRDGS. Pro residues predominate over residues 78–94; it reads QPPPPAAPAAPPAPAPL. Over residues 109 to 121 the composition is skewed to low complexity; sequence GPAATTSTSTPEG. Residues 122-133 show a composition bias toward pro residues; it reads TAPPPPAAPVPP. Residue S451 is modified to Phosphoserine.

The protein belongs to the SMG9 family. Self-associates to form homodimers and forms heterodimers with SMG8; these assembly forms may represent SMG1C intermediate forms. Component of the SMG1C complex composed of SMG1, SMG8 and SMG9. Self-associates to form homodimers and forms heterodimers with SMG8; these assembly forms may represent SMG1C intermediate forms. Interacts with DHX34; the interaction is RNA-independent. In terms of processing, phosphorylated by SMG1.

Involved in nonsense-mediated decay (NMD) of mRNAs containing premature stop codons. Is recruited by release factors to stalled ribosomes together with SMG1 and SMG8 (forming the SMG1C protein kinase complex) and, in the SMG1C complex, is required for the efficient association between SMG1 and SMG8. Plays a role in brain, heart, and eye development. The sequence is that of Nonsense-mediated mRNA decay factor SMG9 from Bos taurus (Bovine).